The chain runs to 147 residues: UPF0735 ACT domain-containing protein GK2605 (147 aa).

Residues 69-144 (TLFFHLEDRS…FVEKVEIVGS (76 aa)) form the ACT domain.

The protein belongs to the UPF0735 family.

The sequence is that of UPF0735 ACT domain-containing protein GK2605 from Geobacillus kaustophilus (strain HTA426).